The sequence spans 347 residues: Violet-sensitive opsin (347 aa).

The Extracellular portion of the chain corresponds to 1 to 31; the sequence is MLEEEDFYLFKNVSNVSPFDGPQYHIAPKWA. A glycan (N-linked (GlcNAc...) asparagine) is linked at Asn-12. A helical membrane pass occupies residues 32 to 56; sequence FTLQAIFMGMVFLIGTPLNFIVLLV. At 57–68 the chain is on the cytoplasmic side; the sequence is TIKYKKLRQPLN. A helical transmembrane segment spans residues 69–94; the sequence is YILVNITVGGFLMCIFSIFPVFVSSS. Over 95–108 the chain is Extracellular; that stretch reads QGYFFFGRIACSID. A disulfide bridge links Cys-105 with Cys-182. A helical transmembrane segment spans residues 109-128; sequence AFVGTLTGLVTGWSLAFLAF. The Cytoplasmic portion of the chain corresponds to 129–147; it reads ERYIVICKPMGNFNFSSSH. A helical membrane pass occupies residues 148-171; that stretch reads ALAVVICTWIIGIVVSVPPFLGWS. Topologically, residues 172-197 are extracellular; sequence RYMPEGLQCSCGPDWYTVGTKYRSEY. Residues 198-225 form a helical membrane-spanning segment; the sequence is YTWFIFIFCFVIPLSLICFSYGRLLGAL. The Cytoplasmic portion of the chain corresponds to 226 to 247; sequence RAVAAQQQESASTQKAEREVSR. The helical transmembrane segment at 248–271 threads the bilayer; that stretch reads MVIFMVGSFCLCYVPYAAMAMYMV. At 272–279 the chain is on the extracellular side; sequence TNRNHGLD. The helical transmembrane segment at 280-304 threads the bilayer; sequence LRLVTIPAFFSKSSCVYNPIIYSFM. Residue Lys-291 is modified to N6-(retinylidene)lysine. Topologically, residues 305 to 347 are cytoplasmic; sequence NKQFRGCIMETVCGRPMSDDSSVSSTSQRTEVSTVSSSQVSPA. Residues 323–347 form a disordered region; it reads DDSSVSSTSQRTEVSTVSSSQVSPA.

It belongs to the G-protein coupled receptor 1 family. Opsin subfamily. Post-translationally, phosphorylated on some or all of the serine and threonine residues present in the C-terminal region. The color pigments are found in the cone photoreceptor cells.

It is found in the membrane. Functionally, visual pigments are the light-absorbing molecules that mediate vision. They consist of an apoprotein, opsin, covalently linked to cis-retinal. This chain is Violet-sensitive opsin, found in Xenopus laevis (African clawed frog).